A 485-amino-acid polypeptide reads, in one-letter code: Cobyric acid synthase (485 aa).

The GATase cobBQ-type domain occupies 248–435 (RLKVAVAVPP…LHGLFESPAA (188 aa)). Catalysis depends on C329, which acts as the Nucleophile. Residue H427 is part of the active site.

Belongs to the CobB/CobQ family. CobQ subfamily.

It participates in cofactor biosynthesis; adenosylcobalamin biosynthesis. Its function is as follows. Catalyzes amidations at positions B, D, E, and G on adenosylcobyrinic A,C-diamide. NH(2) groups are provided by glutamine, and one molecule of ATP is hydrogenolyzed for each amidation. The chain is Cobyric acid synthase from Azotobacter vinelandii (strain DJ / ATCC BAA-1303).